The following is a 67-amino-acid chain: Neurotoxin Cex9 (67 aa).

The LCN-type CS-alpha/beta domain occupies 1–65 (KDGYPVEVTG…TWPLPNKSCG (65 aa)). 4 disulfides stabilise this stretch: cysteine 11–cysteine 64, cysteine 15–cysteine 40, cysteine 24–cysteine 45, and cysteine 28–cysteine 47. At cysteine 64 the chain carries Cysteine amide. Positions 65–67 (GKK) are excised as a propeptide.

The protein belongs to the long (4 C-C) scorpion toxin superfamily. Sodium channel inhibitor family. Beta subfamily. Expressed by the venom gland.

It is found in the secreted. In terms of biological role, beta toxins bind voltage-independently at site-4 of sodium channels (Nav) and shift the voltage of activation toward more negative potentials thereby affecting sodium channel activation and promoting spontaneous and repetitive firing. This Centruroides exilicauda (Bark scorpion) protein is Neurotoxin Cex9.